The following is a 541-amino-acid chain: 1'-carboxy-chondrochloren decarboxylase (541 aa).

One can recognise an FAD-binding PCMH-type domain in the interval 39–226 (TTHRIPAIIS…TRMTIWLAPR (188 aa)).

The enzyme catalyses 1'-carboxy-chondrochloren A + FAD + 2 H(+) = chondrochloren A + FADH2 + CO2. It carries out the reaction 1'-carboxy-chondrochloren B + FAD + 2 H(+) = chondrochloren B + FADH2 + CO2. It participates in antibiotic biosynthesis. Activity is not affected by the addition of EDTA or/and EGTA chelators or in the presence of external metals like Zn(2+), Mg(2+), Mn(2+) and Fe(2+). Activity is inhibited under low oxygen conditions. In terms of biological role, oxidative decarboxylase involved in the biosynthesis of the antibiotics chondrochloren A and chondrochloren B. Catalyzes the decarboxylation of biologically inactive pre-chondrochloren A and pre-chondrochloren B to yield mature chondrochloren A and chondrochloren B, respectively. Cannot decarboxylate free L-tyrosine, 3-chloro-tyrosine or a number of chlorinated and non-chlorinated analog substrates containing variable N-acyl chains. The protein is 1'-carboxy-chondrochloren decarboxylase of Chondromyces crocatus.